A 725-amino-acid polypeptide reads, in one-letter code: Kinesin-like protein KIF2C (725 aa).

An N-acetylalanine modification is found at A2. Residues 2–254 form a globular region; that stretch reads AMDSSLQARL…CHPLTMTDPI (253 aa). S6 and S22 each carry phosphoserine. The tract at residues 89-116 is disordered; sequence QKQKRRSVNSKIPAPKESLRSRSTRMST. Phosphoserine; by AURKB is present on S95. Residues 98–101 carry the Microtubule tip localization signal motif; it reads SKIP. A phosphoserine mark is found at S106, S109, S111, S115, S166, S175, S187, and S192. The segment at 207-238 is negative regulator of microtubule-binding; the sequence is EKKAQNSEMRMKRAQEYDSSFPNWEFARMIKE. The Kinesin motor domain maps to 258 to 588; it reads RICVCVRKRP…LRYADRVKEL (331 aa). ATP contacts are provided by residues R264 and 348–355; that span reads GQTGSGKT. Positions 415 to 418 match the Nuclear localization signal motif; sequence KKAK. Phosphoserine occurs at positions 519, 621, and 633. Positions 618-658 form a coiled coil; the sequence is GNLSKEEEELSSQMSSFNEAMTQIRELEEKAMEELKEIIQQ.

Belongs to the TRAFAC class myosin-kinesin ATPase superfamily. Kinesin family. MCAK/KIF2 subfamily. In terms of assembly, interacts with CENPH. Interacts with MTUS2/TIP150; the interaction is direct. Interacts with MAPRE1; the interaction is direct, regulated by phosphorylation and is probably required for targeting to growing microtubule plus ends. Interacts with KIF18B at microtubule tips; this interaction increases the affinity of both partners for microtubule plus ends and is required for robust microtubule depolymerization. Phosphorylation by AURKA or AURKB strongly reduces KIF18B-binding. Phosphorylation by AURKB, regulates association with centromeres and kinetochores and the microtubule depolymerization activity. In terms of processing, ubiquitinated. Expressed at high levels in thymus and testis, at low levels in small intestine, the mucosal lining of colon, and placenta, and at very low levels in spleen and ovary; expression is not detected in prostate, peripheral blood Leukocytes, heart, brain, lung, liver, skeletal muscle, kidney or pancreas. Isoform 2 is testis-specific.

The protein localises to the cytoplasm. It localises to the cytoskeleton. Its subcellular location is the nucleus. The protein resides in the chromosome. It is found in the centromere. The protein localises to the kinetochore. In complex with KIF18B, constitutes the major microtubule plus-end depolymerizing activity in mitotic cells. Regulates the turnover of microtubules at the kinetochore and functions in chromosome segregation during mitosis. Plays a role in chromosome congression and is required for the lateral to end-on conversion of the chromosome-microtubule attachment. The protein is Kinesin-like protein KIF2C (KIF2C) of Homo sapiens (Human).